We begin with the raw amino-acid sequence, 360 residues long: Ribosomal RNA large subunit methyltransferase M (360 aa).

S-adenosyl-L-methionine-binding positions include serine 192, 225-228, aspartate 244, aspartate 264, and aspartate 280; that span reads APGG. Lysine 309 (proton acceptor) is an active-site residue.

It belongs to the class I-like SAM-binding methyltransferase superfamily. RNA methyltransferase RlmE family. RlmM subfamily. In terms of assembly, monomer.

Its subcellular location is the cytoplasm. It carries out the reaction cytidine(2498) in 23S rRNA + S-adenosyl-L-methionine = 2'-O-methylcytidine(2498) in 23S rRNA + S-adenosyl-L-homocysteine + H(+). Catalyzes the 2'-O-methylation at nucleotide C2498 in 23S rRNA. The chain is Ribosomal RNA large subunit methyltransferase M from Alkalilimnicola ehrlichii (strain ATCC BAA-1101 / DSM 17681 / MLHE-1).